The following is a 536-amino-acid chain: Trigger factor (536 aa).

The 86-residue stretch at 164–249 (GDQVIIDFAG…VKEVKVPAAT (86 aa)) folds into the PPIase FKBP-type domain. Positions 439-536 (IEADDDSGHV…APAKKAAAKK (98 aa)) are disordered. The span at 472 to 502 (TKKEAVKDEAKAEEAPAKKAPAKKAEPKAEA) shows a compositional bias: basic and acidic residues. The segment covering 503–515 (KPAAAKKAAPAKA) has biased composition (low complexity). A compositionally biased stretch (basic and acidic residues) spans 516–525 (AAEEKAEPAK). The span at 527-536 (APAKKAAAKK) shows a compositional bias: basic residues.

It belongs to the FKBP-type PPIase family. Tig subfamily.

The protein localises to the cytoplasm. It carries out the reaction [protein]-peptidylproline (omega=180) = [protein]-peptidylproline (omega=0). Functionally, involved in protein export. Acts as a chaperone by maintaining the newly synthesized protein in an open conformation. Functions as a peptidyl-prolyl cis-trans isomerase. The chain is Trigger factor from Sphingopyxis alaskensis (strain DSM 13593 / LMG 18877 / RB2256) (Sphingomonas alaskensis).